The following is a 393-amino-acid chain: Selenide, water dikinase (393 aa).

Residues 1 to 21 (MSEKEGKVIPETNGMKRPRFD) form a disordered region. The active site involves C42. Residues K45, 68–70 (GMD), D93, D116, and 167–170 (GGQT) each bind ATP. Position 70 (D70) interacts with Mg(2+). D116 provides a ligand contact to Mg(2+). D273 lines the Mg(2+) pocket.

It belongs to the selenophosphate synthase 1 family. Class I subfamily. Homodimer. Mg(2+) serves as cofactor.

It catalyses the reaction hydrogenselenide + ATP + H2O = selenophosphate + AMP + phosphate + 2 H(+). Synthesizes selenophosphate from selenide and ATP. The sequence is that of Selenide, water dikinase from Trypanosoma brucei brucei (strain 927/4 GUTat10.1).